Reading from the N-terminus, the 94-residue chain is Neutrophil antibiotic peptide NP-2 (94 aa).

The first 19 residues, 1 to 19 (MRTLTLLTALLLLALHTQA), serve as a signal peptide directing secretion. The propeptide occupies 20-62 (KSPQGTAEEAPDQEQLVMEDQDISISFGGDKGTALQDADVKAG). 3 disulfide bridges follow: Cys65–Cys93, Cys67–Cys82, and Cys72–Cys92.

It belongs to the alpha-defensin family. As to expression, highest expression in bone marrow and to a much lesser extent in small intestine.

It localises to the secreted. Functionally, active in vitro against S.aureus, fungi, Gram-positive and Gram-negative bacteria and to a lesser extent against an enveloped virus. The chain is Neutrophil antibiotic peptide NP-2 (Defa) from Rattus norvegicus (Rat).